The following is a 211-amino-acid chain: MRVRKRKGAEEHLANNPHYVILNPEDAKGRWHDVFGNDRPIHIEVGSGKGGFITGMALKNPDINYIGIDIQLSVLSYALDKVLASEVPNVKLLRVDGSSLTNYFEDGEVDMMYLNFSDPWPKTKHEKRRLTYKDFLDTYKRILPEHGEIHFKTDNRGLFEYSLASFSQYGMTLRQIWLDLHASNYEGNVMTEYEEKFSNKGQVIYRVEANF.

4 residues coordinate S-adenosyl-L-methionine: Glu44, Asp69, Asp96, and Asp118. Asp118 is an active-site residue. Lys122 contributes to the substrate binding site. An interaction with RNA region spans residues 124 to 129; the sequence is KHEKRR. Substrate contacts are provided by residues Asp154 and 191–194; that span reads TEYE.

This sequence belongs to the class I-like SAM-binding methyltransferase superfamily. TrmB family.

The enzyme catalyses guanosine(46) in tRNA + S-adenosyl-L-methionine = N(7)-methylguanosine(46) in tRNA + S-adenosyl-L-homocysteine. It participates in tRNA modification; N(7)-methylguanine-tRNA biosynthesis. Its function is as follows. Catalyzes the formation of N(7)-methylguanine at position 46 (m7G46) in tRNA. The polypeptide is tRNA (guanine-N(7)-)-methyltransferase (Streptococcus pyogenes serotype M12 (strain MGAS2096)).